The chain runs to 310 residues: Ribosomal RNA small subunit methyltransferase H (310 aa).

S-adenosyl-L-methionine contacts are provided by residues 32–34 (AGH), Asp52, Phe79, Asp100, and Gln107.

The protein belongs to the methyltransferase superfamily. RsmH family.

It localises to the cytoplasm. The catalysed reaction is cytidine(1402) in 16S rRNA + S-adenosyl-L-methionine = N(4)-methylcytidine(1402) in 16S rRNA + S-adenosyl-L-homocysteine + H(+). Functionally, specifically methylates the N4 position of cytidine in position 1402 (C1402) of 16S rRNA. The sequence is that of Ribosomal RNA small subunit methyltransferase H from Halalkalibacterium halodurans (strain ATCC BAA-125 / DSM 18197 / FERM 7344 / JCM 9153 / C-125) (Bacillus halodurans).